We begin with the raw amino-acid sequence, 591 residues long: Aspartate--tRNA(Asp/Asn) ligase (591 aa).

An L-aspartate-binding site is contributed by E174. Positions 198–201 (QLFK) are aspartate. R220 contributes to the L-aspartate binding site. Residues 220–222 (RDE) and Q229 contribute to the ATP site. An L-aspartate-binding site is contributed by H450. E483 lines the ATP pocket. L-aspartate is bound at residue R490. An ATP-binding site is contributed by 535-538 (GLDR).

It belongs to the class-II aminoacyl-tRNA synthetase family. Type 1 subfamily. In terms of assembly, homodimer.

It is found in the cytoplasm. The enzyme catalyses tRNA(Asx) + L-aspartate + ATP = L-aspartyl-tRNA(Asx) + AMP + diphosphate. Functionally, aspartyl-tRNA synthetase with relaxed tRNA specificity since it is able to aspartylate not only its cognate tRNA(Asp) but also tRNA(Asn). Reaction proceeds in two steps: L-aspartate is first activated by ATP to form Asp-AMP and then transferred to the acceptor end of tRNA(Asp/Asn). This chain is Aspartate--tRNA(Asp/Asn) ligase, found in Pseudomonas putida (strain W619).